The primary structure comprises 365 residues: UDP-N-acetylglucosamine--N-acetylmuramyl-(pentapeptide) pyrophosphoryl-undecaprenol N-acetylglucosamine transferase (365 aa).

Residues 17 to 19 (TGG), asparagine 129, arginine 167, serine 194, isoleucine 250, 269 to 274 (ALTVSE), and glutamine 295 each bind UDP-N-acetyl-alpha-D-glucosamine.

It belongs to the glycosyltransferase 28 family. MurG subfamily.

Its subcellular location is the cell inner membrane. The enzyme catalyses di-trans,octa-cis-undecaprenyl diphospho-N-acetyl-alpha-D-muramoyl-L-alanyl-D-glutamyl-meso-2,6-diaminopimeloyl-D-alanyl-D-alanine + UDP-N-acetyl-alpha-D-glucosamine = di-trans,octa-cis-undecaprenyl diphospho-[N-acetyl-alpha-D-glucosaminyl-(1-&gt;4)]-N-acetyl-alpha-D-muramoyl-L-alanyl-D-glutamyl-meso-2,6-diaminopimeloyl-D-alanyl-D-alanine + UDP + H(+). It functions in the pathway cell wall biogenesis; peptidoglycan biosynthesis. Functionally, cell wall formation. Catalyzes the transfer of a GlcNAc subunit on undecaprenyl-pyrophosphoryl-MurNAc-pentapeptide (lipid intermediate I) to form undecaprenyl-pyrophosphoryl-MurNAc-(pentapeptide)GlcNAc (lipid intermediate II). The polypeptide is UDP-N-acetylglucosamine--N-acetylmuramyl-(pentapeptide) pyrophosphoryl-undecaprenol N-acetylglucosamine transferase (Shewanella halifaxensis (strain HAW-EB4)).